The following is a 380-amino-acid chain: Large ribosomal subunit protein mL38 (380 aa).

A mitochondrion-targeting transit peptide spans 1 to 26 (MAAPWWRVVLNGSRNWRGFSTSAALS). Positions 101 to 122 (QQLLERKRVLRELRTSVEEERA) form a coiled coil.

Belongs to the phosphatidylethanolamine-binding protein family. Mitochondrion-specific ribosomal protein mL38 subfamily. In terms of assembly, component of the mitochondrial ribosome large subunit (39S) which comprises a 16S rRNA and about 50 distinct proteins.

The protein localises to the mitochondrion. This Bos taurus (Bovine) protein is Large ribosomal subunit protein mL38 (MRPL38).